Here is a 143-residue protein sequence, read N- to C-terminus: Large ribosomal subunit protein uL16 (143 aa).

It belongs to the universal ribosomal protein uL16 family. In terms of assembly, part of the 50S ribosomal subunit.

Its function is as follows. Binds 23S rRNA and is also seen to make contacts with the A and possibly P site tRNAs. In Caulobacter vibrioides (strain ATCC 19089 / CIP 103742 / CB 15) (Caulobacter crescentus), this protein is Large ribosomal subunit protein uL16.